Here is a 442-residue protein sequence, read N- to C-terminus: D-serine dehydratase (442 aa).

Lysine 118 bears the N6-(pyridoxal phosphate)lysine mark.

This sequence belongs to the serine/threonine dehydratase family. DsdA subfamily. In terms of assembly, monomer. Pyridoxal 5'-phosphate is required as a cofactor.

The catalysed reaction is D-serine = pyruvate + NH4(+). The polypeptide is D-serine dehydratase (Shigella flexneri).